The primary structure comprises 420 residues: Multiple sugar-binding protein (420 aa).

Positions 1 to 22 (MKWYKKIGLLGIVGLTSVLLAA) are cleaved as a signal peptide. Cys23 carries N-palmitoyl cysteine lipidation. Residue Cys23 is the site of S-diacylglycerol cysteine attachment.

Belongs to the bacterial solute-binding protein 1 family.

The protein resides in the cell membrane. Involved in a binding protein-dependent transport system responsible for the uptake of melibiose, raffinose and isomaltotriose. The polypeptide is Multiple sugar-binding protein (Streptococcus mutans serotype c (strain ATCC 700610 / UA159)).